Consider the following 280-residue polypeptide: Transmembrane protein 119 (280 aa).

The signal sequence occupies residues 1 to 20; it reads MVPWFLLSLLLLARPVPGVA. Over 21–91 the chain is Extracellular; it reads YSVSLPASFL…IMDFFRQYVM (71 aa). Ser36 is a glycosylation site (O-linked (Xyl...) (chondroitin sulfate) serine). The span at 38–47 shows a compositional bias: low complexity; sequence EAEGSSASSP. The tract at residues 38 to 73 is disordered; that stretch reads EAEGSSASSPSLPPPGTPAFSPTPERPQPTALDGPV. A helical transmembrane segment spans residues 92 to 112; sequence LIAVVGSLTFLIMFIVCAALI. Residues 113–280 lie on the Cytoplasmic side of the membrane; that stretch reads TRQKHKATAY…CACNRVSPSV (168 aa). 2 disordered regions span residues 133 to 162 and 181 to 280; these read VDQR…EGLD and PARA…SPSV. Residues 148 to 162 are compositionally biased toward basic and acidic residues; it reads VPDRAPDSRHEEGLD. Ser269 carries the post-translational modification Phosphoserine.

Interacts with SMAD1, SMAD5 and RUNX2. Expressed in spermatocytes and spermatids in the developing testis (at protein level). Expressed in the brain, heart, lung, spleen, skeletal muscle, ovary, testis and epididymis. Predominantly expressed in osteoblasts.

The protein localises to the cell membrane. It localises to the cytoplasm. It is found in the endoplasmic reticulum membrane. The protein resides in the secreted. Its function is as follows. Plays an important role in bone formation and normal bone mineralization. Promotes the differentiation of myoblasts into osteoblasts. May induce the commitment and differentiation of myoblasts into osteoblasts through an enhancement of BMP2 production and interaction with the BMP-RUNX2 pathway. Up-regulates the expression of ATF4 which plays a central role in osteoblast differentiation. Essential for normal spermatogenesis and late testicular differentiation. This chain is Transmembrane protein 119 (Tmem119), found in Mus musculus (Mouse).